Consider the following 318-residue polypeptide: Beta-ketoacyl-[acyl-carrier-protein] synthase III (318 aa).

Active-site residues include C113 and H245. The tract at residues 246 to 250 (QANIR) is ACP-binding. N275 is a catalytic residue.

It belongs to the thiolase-like superfamily. FabH family. In terms of assembly, homodimer.

Its subcellular location is the cytoplasm. The catalysed reaction is malonyl-[ACP] + acetyl-CoA + H(+) = 3-oxobutanoyl-[ACP] + CO2 + CoA. It functions in the pathway lipid metabolism; fatty acid biosynthesis. Catalyzes the condensation reaction of fatty acid synthesis by the addition to an acyl acceptor of two carbons from malonyl-ACP. Catalyzes the first condensation reaction which initiates fatty acid synthesis and may therefore play a role in governing the total rate of fatty acid production. Possesses both acetoacetyl-ACP synthase and acetyl transacylase activities. Its substrate specificity determines the biosynthesis of branched-chain and/or straight-chain of fatty acids. The polypeptide is Beta-ketoacyl-[acyl-carrier-protein] synthase III (Wolbachia pipientis wMel).